A 352-amino-acid polypeptide reads, in one-letter code: Molybdenum import ATP-binding protein ModC (352 aa).

The ABC transporter domain maps to 1–229 (MLELNFSQTL…SVMNPWLPKE (229 aa)). ATP is bound at residue 31–38 (GVSGAGKT). The Mop domain maps to 289–352 (QTSIRNVLRA…AQIKSVSITA (64 aa)).

Belongs to the ABC transporter superfamily. Molybdate importer (TC 3.A.1.8) family. The complex is composed of two ATP-binding proteins (ModC), two transmembrane proteins (ModB) and a solute-binding protein (ModA).

The protein localises to the cell inner membrane. It catalyses the reaction molybdate(out) + ATP + H2O = molybdate(in) + ADP + phosphate + H(+). In terms of biological role, part of the ABC transporter complex ModABC involved in molybdenum import. Responsible for energy coupling to the transport system. This chain is Molybdenum import ATP-binding protein ModC, found in Escherichia coli O6:H1 (strain CFT073 / ATCC 700928 / UPEC).